Here is a 97-residue protein sequence, read N- to C-terminus: Class II hydrophobin A (97 aa).

Positions 1 to 15 (MKSVVFASLIASALA) are cleaved as a signal peptide. Intrachain disulfides connect C30-C79, C40-C53, and C80-C91.

The protein belongs to the cerato-ulmin hydrophobin family.

It is found in the secreted. The protein localises to the cell wall. It localises to the vacuole. Its subcellular location is the cytoplasmic vesicle. Aerial growth, conidiation, and dispersal of filamentous fungi in the environment rely upon a capability of their secreting small amphipathic proteins called hydrophobins (HPBs) with low sequence identity. Class I can self-assemble into an outermost layer of rodlet bundles on aerial cell surfaces, conferring cellular hydrophobicity that supports fungal growth, development and dispersal; whereas Class II form highly ordered films at water-air interfaces through intermolecular interactions but contribute nothing to the rodlet structure. Hyd2A contributes to certain cell wall-related features, such as hydrophobicity but is not involved in cell wall-related events during fungal proliferation in host hemocoel. Does not contribute to conidial hydrophobicity. Involved in insect hemocoel colonization independent of cell hydrophobicity, as well as in the asexual development. This Beauveria bassiana (strain ARSEF 2860) (White muscardine disease fungus) protein is Class II hydrophobin A.